The chain runs to 398 residues: Phosphoglycerate kinase (398 aa).

Substrate-binding positions include 23–25 (DLN), R38, 61–64 (HFGR), R120, and R153. ATP-binding positions include K203, E325, and 355–358 (GGDT).

Belongs to the phosphoglycerate kinase family. As to quaternary structure, monomer.

It localises to the cytoplasm. It catalyses the reaction (2R)-3-phosphoglycerate + ATP = (2R)-3-phospho-glyceroyl phosphate + ADP. It participates in carbohydrate degradation; glycolysis; pyruvate from D-glyceraldehyde 3-phosphate: step 2/5. This is Phosphoglycerate kinase from Mesorhizobium japonicum (strain LMG 29417 / CECT 9101 / MAFF 303099) (Mesorhizobium loti (strain MAFF 303099)).